The chain runs to 429 residues: Glutamate-1-semialdehyde 2,1-aminomutase 2 (429 aa).

K268 carries the N6-(pyridoxal phosphate)lysine modification.

It belongs to the class-III pyridoxal-phosphate-dependent aminotransferase family. HemL subfamily. Homodimer. Requires pyridoxal 5'-phosphate as cofactor.

Its subcellular location is the cytoplasm. The catalysed reaction is (S)-4-amino-5-oxopentanoate = 5-aminolevulinate. It participates in porphyrin-containing compound metabolism; protoporphyrin-IX biosynthesis; 5-aminolevulinate from L-glutamyl-tRNA(Glu): step 2/2. This is Glutamate-1-semialdehyde 2,1-aminomutase 2 from Staphylococcus epidermidis (strain ATCC 35984 / DSM 28319 / BCRC 17069 / CCUG 31568 / BM 3577 / RP62A).